The sequence spans 377 residues: MTSAGGFPAGAGGYQTPGGHSASPAHEAPPGGAEGLAAEVHTLERAIFEVKRIIVGQDQLVERMLVGLLSKGHVLLEGVPGVAKTLAVETFARVVGGTFSRIQFTPDLVPTDIIGTRIYRQGREEFDTELGPVVANFLLADEINRAPAKVQSALLEVMQERHVSIGGRTFPMPSPFLVMATQNPIEHEGVYPLPEAQRDRFLFKINVGYPSPEEEREIIYRMGVTPPQAKQILSTGDLLRLQEIAANNFVHHALVDYVVRVVFATRKPEQLGMNDVKSWVAFGASPRASLGIIAAARSLALVRGRDYVIPQDVIEVIPDVLRHRLVLTYDALADEISPEIVINRVLQTVALPQVNAVPQQGHSVPPVMQAAAAASGR.

Residues 1–33 are disordered; the sequence is MTSAGGFPAGAGGYQTPGGHSASPAHEAPPGGA. Residues 7-16 show a composition bias toward gly residues; sequence FPAGAGGYQT. The span at 19-33 shows a compositional bias: low complexity; that stretch reads GHSASPAHEAPPGGA. Residue 78 to 85 coordinates ATP; the sequence is GVPGVAKT.

It belongs to the MoxR family. In terms of assembly, interacts with RipA. Interacts with host Toll-like receptor 4 (TLR4).

Its function is as follows. Displays ATP-enhanced chaperone activity. Required for the proper folding of the peptidoglycan endopeptidase RipA and its secretion through the TAT secretion system. In vitro, prevents thermal aggregation of MalZ protein and protects the functional activity of the restriction enzyme NdeI from thermal inactivation. In terms of biological role, could be a moonlighting protein that uses a multipronged approach to dampen host-directed immunity for efficient replication, survival and pathogenesis. Can enhance virulence by inhibiting autophagy and apoptosis, and disrupting cellular bioenergetics. Binds and activates host TLR4 on the surface of macrophage cells, leading to the activation of the host NFKB and MAPK signaling cascades and enhanced secretion of proinflammatory cytokines. Inhibits autophagic flux via activation of PI3K-AKT-MTOR-ULK1 signaling cascade and represses apoptosis via inhibiting protooncogene c-FOS and MAPK JNK1/2. Also induces robust disruption of cellular bioenergetics by metabolic reprogramming to rewire the citric acid cycle intermediates for its benefit. This Mycobacterium tuberculosis (strain ATCC 25618 / H37Rv) protein is Chaperone MoxR1.